We begin with the raw amino-acid sequence, 340 residues long: Heat-inducible transcription repressor HrcA (340 aa).

This sequence belongs to the HrcA family.

Its function is as follows. Negative regulator of class I heat shock genes (grpE-dnaK-dnaJ and groELS operons). Prevents heat-shock induction of these operons. This is Heat-inducible transcription repressor HrcA from Burkholderia thailandensis (strain ATCC 700388 / DSM 13276 / CCUG 48851 / CIP 106301 / E264).